Reading from the N-terminus, the 479-residue chain is Ribosomal lysine N-methyltransferase 2 (479 aa).

The 304-residue stretch at 22-325 (PNISICESPE…INEELFLNYG (304 aa)) folds into the SET domain. Tyr-324 contacts S-adenosyl-L-methionine.

This sequence belongs to the class V-like SAM-binding methyltransferase superfamily. RKM2 family.

Functionally, S-adenosyl-L-methionine-dependent protein-lysine N-methyltransferase that trimethylates 60S ribosomal protein L12 (RPL12A and RPL12B) at 'Lys-4' and 'Lys-11'. The chain is Ribosomal lysine N-methyltransferase 2 from Saccharomyces cerevisiae (strain ATCC 204508 / S288c) (Baker's yeast).